Consider the following 516-residue polypeptide: MATSGKQYGLILPQKRASKSAPLARPSVFGDDSDDETSVGESLQKEAIKKKMMKQTRLEMQKALEEDSTVYEYDNVYDDIQKQRLESNKKLLGGEDKKPKYINQLLRAVEERKKEQERRDERKIQKEREAEGEKFADKEAFVTSAYRQKLKERQEELEREKREAELEAALDVKKQKDLSGFYRHFLNQTVGEEVVPDRSAQSEEKATSSAAAERSPSPESTANRRESEAESHSDDDQVDVKPAFSKTTANNHAKRQYRQKSPLSDSDDGDERERERKEIKEKSHKDRDRDRAKEKERERMRDKDKHSHRKEDRGGDRRRERDREEDRARDRRDRDRNDRHGIRDRRNSSPKDRERDRKGERDRRDNSPKDRERDRKGERDRRDNSPKDRERETRDKSPKDRRDKSPKDRDRERRDKSPKDREPERKGERDIREREDNKVDSQRKNQEDEKSSKSKTEHGKEEKLVEETENSSGAQQEISKFAKRSSDQTVSSARERYLARQLARFASKSYVEKEED.

Disordered stretches follow at residues 1-43, 111-137, 151-170, and 188-494; these read MATS…GESL, ERKK…KFAD, KERQ…EAAL, and QTVG…SSAR. Ser-33 carries the post-translational modification Phosphoserine. Residues 100–176 adopt a coiled-coil conformation; the sequence is KYINQLLRAV…EAALDVKKQK (77 aa). Residues 207–221 are compositionally biased toward low complexity; sequence TSSAAAERSPSPEST. Composition is skewed to basic and acidic residues over residues 222-239 and 271-466; these read ANRR…DQVD and ERER…KLVE. Residues 358–401 adopt a coiled-coil conformation; that stretch reads KGERDRRDNSPKDRERDRKGERDRRDNSPKDRERETRDKSPKDR.

Belongs to the NSRP1 family.

This chain is Nuclear speckle splicing regulatory protein 1 (nsrp1), found in Danio rerio (Zebrafish).